A 354-amino-acid chain; its full sequence is Ferredoxin--NADP reductase (354 aa).

FAD-binding residues include Asp39, Gln47, Tyr52, Val92, Phe127, Asp296, and Thr337.

It belongs to the ferredoxin--NADP reductase type 2 family. In terms of assembly, homodimer. The cofactor is FAD.

The enzyme catalyses 2 reduced [2Fe-2S]-[ferredoxin] + NADP(+) + H(+) = 2 oxidized [2Fe-2S]-[ferredoxin] + NADPH. The polypeptide is Ferredoxin--NADP reductase (Albidiferax ferrireducens (strain ATCC BAA-621 / DSM 15236 / T118) (Rhodoferax ferrireducens)).